Reading from the N-terminus, the 592-residue chain is Potassium-transporting ATPase potassium-binding subunit (592 aa).

The next 11 helical transmembrane spans lie at 7–27 (LQTVLLFVVLLAMVKPLGTFM), 71–91 (VLFNLVIFATLFAMLMLQHLL), 136–156 (GLTVHNFVSAATGIAVAIAVI), 179–199 (LYILVPISLIAALVLVSQGVI), 287–307 (LEILLILLIPFSLTYTFGAMV), 314–334 (WTLLGVMLLILLASFAVLQGV), 411–431 (GLYTMLAFAVIAVFVSGLMIG), 449–469 (SVVTVLAAGVMVLILSGIAMI), 473–493 (AVAAMANPGAHGLSEVLYAFA), 515–535 (ILGALAMIVGRFAPAVAVLAM), and 559–579 (FALWLTLVILIVGALTFFPAL).

This sequence belongs to the KdpA family. The system is composed of three essential subunits: KdpA, KdpB and KdpC.

Its subcellular location is the cell inner membrane. Functionally, part of the high-affinity ATP-driven potassium transport (or Kdp) system, which catalyzes the hydrolysis of ATP coupled with the electrogenic transport of potassium into the cytoplasm. This subunit binds the periplasmic potassium ions and delivers the ions to the membrane domain of KdpB through an intramembrane tunnel. In Geobacter sulfurreducens (strain ATCC 51573 / DSM 12127 / PCA), this protein is Potassium-transporting ATPase potassium-binding subunit.